A 903-amino-acid chain; its full sequence is Protein translocase subunit SecA (903 aa).

ATP-binding positions include Gln85, 103–107 (GEGKT), and Asp492. The interval 863-890 (GDGVKQPVRRDKKVGRNSPCPCGSGKKY) is disordered. Cys882, Cys884, Cys893, and Cys894 together coordinate Zn(2+).

Belongs to the SecA family. As to quaternary structure, monomer and homodimer. Part of the essential Sec protein translocation apparatus which comprises SecA, SecYEG and auxiliary proteins SecDF. Other proteins may also be involved. The cofactor is Zn(2+).

The protein resides in the cell membrane. It localises to the cytoplasm. The catalysed reaction is ATP + H2O + cellular proteinSide 1 = ADP + phosphate + cellular proteinSide 2.. Its function is as follows. Part of the Sec protein translocase complex. Interacts with the SecYEG preprotein conducting channel. Has a central role in coupling the hydrolysis of ATP to the transfer of proteins into and across the cell membrane, serving as an ATP-driven molecular motor driving the stepwise translocation of polypeptide chains across the membrane. This is Protein translocase subunit SecA from Desulforudis audaxviator (strain MP104C).